A 229-amino-acid chain; its full sequence is Orotidine 5'-phosphate decarboxylase (229 aa).

Residues Asp-12, Lys-34, 61–70, Thr-116, Arg-177, Gln-186, Gly-206, and Arg-207 contribute to the substrate site; that span reads DWKLHDIGAT. Catalysis depends on Lys-63, which acts as the Proton donor.

Belongs to the OMP decarboxylase family. Type 1 subfamily. In terms of assembly, homodimer.

The enzyme catalyses orotidine 5'-phosphate + H(+) = UMP + CO2. The protein operates within pyrimidine metabolism; UMP biosynthesis via de novo pathway; UMP from orotate: step 2/2. Functionally, catalyzes the decarboxylation of orotidine 5'-monophosphate (OMP) to uridine 5'-monophosphate (UMP). This Caulobacter sp. (strain K31) protein is Orotidine 5'-phosphate decarboxylase.